The primary structure comprises 296 residues: 4-hydroxy-tetrahydrodipicolinate synthase (296 aa).

T49 is a binding site for pyruvate. Residue Y137 is the Proton donor/acceptor of the active site. The Schiff-base intermediate with substrate role is filled by K166. I208 is a binding site for pyruvate.

This sequence belongs to the DapA family. As to quaternary structure, homotetramer; dimer of dimers.

It is found in the cytoplasm. The enzyme catalyses L-aspartate 4-semialdehyde + pyruvate = (2S,4S)-4-hydroxy-2,3,4,5-tetrahydrodipicolinate + H2O + H(+). The protein operates within amino-acid biosynthesis; L-lysine biosynthesis via DAP pathway; (S)-tetrahydrodipicolinate from L-aspartate: step 3/4. Functionally, catalyzes the condensation of (S)-aspartate-beta-semialdehyde [(S)-ASA] and pyruvate to 4-hydroxy-tetrahydrodipicolinate (HTPA). The polypeptide is 4-hydroxy-tetrahydrodipicolinate synthase (Chlorobium limicola (strain DSM 245 / NBRC 103803 / 6330)).